Here is a 531-residue protein sequence, read N- to C-terminus: Zinc finger protein 692 (531 aa).

Residues 155–178 show a composition bias toward basic and acidic residues; sequence EAQGLECEQRERTQETRLSRRVDS. 2 disordered regions span residues 155-249 and 287-307; these read EAQG…PATL and MTESLESPGSQAQSAPNPTWD. A compositionally biased stretch (acidic residues) spans 186 to 206; that stretch reads LGEDQDVEEEEEEEEEEEELL. Position 231 is a phosphoserine (Ser231). A compositionally biased stretch (polar residues) spans 290–303; sequence SLESPGSQAQSAPN. 5 C2H2-type zinc fingers span residues 327-352, 358-382, 388-410, 416-438, and 447-470; these read MPCDFPGCGRIFSNRQYLNHHKKYQH, FCCPEPACGKSFNFKKHLKEHVKLH, YICEFCARSFRTSSNLVIHRRIH, LQCEICGFTCRQKASLNWHRRKH, and FPCEFCGKRFEKPDSVVAHCSKSH. Ser469 bears the Phosphoserine mark. The segment at 474–531 is disordered; sequence LPAQEPPGSLVSSPSISAPESLQSPEGASISTTSDSNPASSTSISSPGVPDPRNREKS. The span at 483–499 shows a compositional bias: polar residues; sequence LVSSPSISAPESLQSPE. Low complexity predominate over residues 502-520; that stretch reads SISTTSDSNPASSTSISSP.

This sequence belongs to the krueppel C2H2-type zinc-finger protein family. Post-translationally, phosphorylation at Ser-469 results in loss of DNA-binding activity.

The protein localises to the nucleus. May act as an transcriptional repressor for PCK1 gene expression, in turn may participate in the hepatic gluconeogenesis regulation through the activated AMPK signaling pathway. The sequence is that of Zinc finger protein 692 from Mus musculus (Mouse).